A 316-amino-acid chain; its full sequence is Methionyl-tRNA formyltransferase (316 aa).

111–114 (GLLP) serves as a coordination point for (6S)-5,6,7,8-tetrahydrofolate.

Belongs to the Fmt family.

The enzyme catalyses L-methionyl-tRNA(fMet) + (6R)-10-formyltetrahydrofolate = N-formyl-L-methionyl-tRNA(fMet) + (6S)-5,6,7,8-tetrahydrofolate + H(+). Attaches a formyl group to the free amino group of methionyl-tRNA(fMet). The formyl group appears to play a dual role in the initiator identity of N-formylmethionyl-tRNA by promoting its recognition by IF2 and preventing the misappropriation of this tRNA by the elongation apparatus. The protein is Methionyl-tRNA formyltransferase of Chlamydia trachomatis serovar L2b (strain UCH-1/proctitis).